A 756-amino-acid polypeptide reads, in one-letter code: Transient receptor potential cation channel subfamily V member 2 (756 aa).

The tract at residues 1 to 45 is disordered; the sequence is MTSASNPPAFRLETSDGDEEGSAEVNKGKNEPPPMESPFQGEDRN. The tract at residues 1–385 is required for interaction with SLC50A1; the sequence is MTSASNPPAF…LLQEKWDRLI (385 aa). Topologically, residues 1–387 are cytoplasmic; sequence MTSASNPPAF…QEKWDRLIPR (387 aa). Phosphoserine is present on residues Ser15 and Ser77. ANK repeat units follow at residues 68–110, 111–157, 158–203, 204–239, 240–288, and 289–315; these read NRFD…TEGS, TGKT…DEFY, RGHS…TCFY, FGEL…ATDS, LGNT…ICNH, and QGLT…REFS. The helical transmembrane segment at 388-408 threads the bilayer; it reads FFFNFACYLVYMIIFTIVAYH. The Extracellular portion of the chain corresponds to 409 to 428; that stretch reads QPSLEQPAIPSSKATFGDSM. Residues 429 to 449 form a helical membrane-spanning segment; it reads LLLGHILILLGGIYLLLGQLW. The Cytoplasmic portion of the chain corresponds to 450-455; the sequence is YFWRRR. The chain crosses the membrane as a helical span at residues 456–476; the sequence is LFIWISFMDSYFEILFLVQAL. The Extracellular portion of the chain corresponds to 477-490; the sequence is LTVLSQVLRFVETE. A helical transmembrane segment spans residues 491 to 511; it reads WYLPLLVSSLVLGWLNLLYYT. The Cytoplasmic portion of the chain corresponds to 512-532; that stretch reads RGFQHTGIYSVMIQKVILRDL. A helical transmembrane segment spans residues 533–553; the sequence is LRFLLVYLVFLFGFAVALVSL. A disordered region spans residues 559 to 583; the sequence is SPKAPEDSNTTVTEKPTLGQEEEPV. Residue Asn567 is glycosylated (N-linked (GlcNAc...) asparagine). Positions 568–604 form an intramembrane region, pore-forming; it reads TTVTEKPTLGQEEEPVPYGGILDASLELFKFTIGMGE. Residues 617–637 form a helical membrane-spanning segment; the sequence is VLLLLLAYVLLTYVLLLNMLI. Residues 638-756 are Cytoplasmic-facing; the sequence is ALMSETVNSV…HLPLQVLQSH (119 aa). Residues 719 to 756 form a disordered region; that stretch reads EDPSGAGITGYKKNPTSKPGKNSASEEDHLPLQVLQSH. The span at 732–741 shows a compositional bias: polar residues; sequence NPTSKPGKNS. Residues Ser743 and Ser755 each carry the phosphoserine modification.

This sequence belongs to the transient receptor (TC 1.A.4) family. TrpV subfamily. TRPV2 sub-subfamily. In terms of assembly, homotetramer. Interacts with a cAMP-dependent protein kinase type II regulatory subunit (PRKAR2A or PRKAR2B) and ACBD3. Interacts with SLC50A1; the interaction probably occurs intracellularly and depends on TRPV2 N-glycosylation. Post-translationally, N-glycosylated. In terms of processing, phosphorylated by PKA. In terms of tissue distribution, abundantly expressed in spleen, placenta, skeleton muscle, lung and brain.

Its subcellular location is the cell membrane. It is found in the cytoplasm. The protein resides in the melanosome. It catalyses the reaction Ca(2+)(in) = Ca(2+)(out). The enzyme catalyses Mg(2+)(in) = Mg(2+)(out). The catalysed reaction is Na(+)(in) = Na(+)(out). It carries out the reaction K(+)(in) = K(+)(out). In terms of biological role, calcium-permeable, non-selective cation channel with an outward rectification. Seems to be regulated, at least in part, by IGF1, PDGF and neuropeptide head activator. May transduce physical stimuli in mast cells. Activated by temperatures higher than 52 degrees Celsius; is not activated by vanilloids and acidic pH. The sequence is that of Transient receptor potential cation channel subfamily V member 2 (Trpv2) from Mus musculus (Mouse).